Consider the following 95-residue polypeptide: Aspartyl/glutamyl-tRNA(Asn/Gln) amidotransferase subunit C (95 aa).

It belongs to the GatC family. Heterotrimer of A, B and C subunits.

It catalyses the reaction L-glutamyl-tRNA(Gln) + L-glutamine + ATP + H2O = L-glutaminyl-tRNA(Gln) + L-glutamate + ADP + phosphate + H(+). The enzyme catalyses L-aspartyl-tRNA(Asn) + L-glutamine + ATP + H2O = L-asparaginyl-tRNA(Asn) + L-glutamate + ADP + phosphate + 2 H(+). Its function is as follows. Allows the formation of correctly charged Asn-tRNA(Asn) or Gln-tRNA(Gln) through the transamidation of misacylated Asp-tRNA(Asn) or Glu-tRNA(Gln) in organisms which lack either or both of asparaginyl-tRNA or glutaminyl-tRNA synthetases. The reaction takes place in the presence of glutamine and ATP through an activated phospho-Asp-tRNA(Asn) or phospho-Glu-tRNA(Gln). The chain is Aspartyl/glutamyl-tRNA(Asn/Gln) amidotransferase subunit C from Magnetococcus marinus (strain ATCC BAA-1437 / JCM 17883 / MC-1).